Consider the following 255-residue polypeptide: Imidazole glycerol phosphate synthase subunit HisF (255 aa).

Active-site residues include Asp-12 and Asp-131.

This sequence belongs to the HisA/HisF family. Heterodimer of HisH and HisF.

Its subcellular location is the cytoplasm. It carries out the reaction 5-[(5-phospho-1-deoxy-D-ribulos-1-ylimino)methylamino]-1-(5-phospho-beta-D-ribosyl)imidazole-4-carboxamide + L-glutamine = D-erythro-1-(imidazol-4-yl)glycerol 3-phosphate + 5-amino-1-(5-phospho-beta-D-ribosyl)imidazole-4-carboxamide + L-glutamate + H(+). Its pathway is amino-acid biosynthesis; L-histidine biosynthesis; L-histidine from 5-phospho-alpha-D-ribose 1-diphosphate: step 5/9. Its function is as follows. IGPS catalyzes the conversion of PRFAR and glutamine to IGP, AICAR and glutamate. The HisF subunit catalyzes the cyclization activity that produces IGP and AICAR from PRFAR using the ammonia provided by the HisH subunit. The protein is Imidazole glycerol phosphate synthase subunit HisF of Ruthia magnifica subsp. Calyptogena magnifica.